A 454-amino-acid polypeptide reads, in one-letter code: Tol-Pal system protein TolB (454 aa).

The first 30 residues, 1 to 30 (MNDARSITRRRFMTLTGSGLAMLGGGHAFA), serve as a signal peptide directing secretion.

The protein belongs to the TolB family. As to quaternary structure, the Tol-Pal system is composed of five core proteins: the inner membrane proteins TolA, TolQ and TolR, the periplasmic protein TolB and the outer membrane protein Pal. They form a network linking the inner and outer membranes and the peptidoglycan layer.

It is found in the periplasm. Part of the Tol-Pal system, which plays a role in outer membrane invagination during cell division and is important for maintaining outer membrane integrity. The sequence is that of Tol-Pal system protein TolB from Bradyrhizobium diazoefficiens (strain JCM 10833 / BCRC 13528 / IAM 13628 / NBRC 14792 / USDA 110).